We begin with the raw amino-acid sequence, 886 residues long: MSEILKNDVDPIETQDWLQSLDSLIREEGVERAQYIVEQVIGQARTSGVSLPTGVTTDYVNTIPVAEQPAYPGDHAIERRIRSAVRWNAIAMVLRSQKKDLDLGGHISTFQSAATMYEVCYNHFFKAATEKNGGDLIFFQGHAAPGMYARAFLEGRLTEEQMDNFRQEAFTDGLSSYPHPKLMPEFWQFSTVSMGLGPVNAIYQARFLKYLDNRGLKDTKDQKVYAFLGDGEMDEIESKGALTFAAREHLDNLIFTISCNLQRLDGPVNGNGKIVQELEGLFTGAGWEVIKVLWGSDWDKLFAKDTSGKLTQLMMEVVDGDYLTFKSKDGAYIREHFFGRYPETAALVADMTDDEIWALRRGAHDSEKLYAAYAKAQNATKPVVILAHQVKGYKIPEAESKNTAHQSKKMSYESLKGFRDFFELPLTDEQVEKLEYIKFAEGTPEYEYLHGHRKALNGYVPARRTKFDVEYKVPALEEFKALLEEQPRGISTTMAFTRALNILLKDKNIGKTIVPMIADEARTFGMEGLFRQVGIYNPHGQNYIPSDRDLVAYYREAKDGQVLQEGINELGATASWLAAANSYSVNNQPMIPFFIYYSMFGFQRVGDMMWAAGDQLARGFMVGGTSGRTTLNGEGLQHEDGHSHIQAGIIPNCITYDPSFAFEVAVIMQDGINRMYGEKQEDVFYYMTTLNEVMDQPAMPAGAEEGIRKGLYKFETVEGKKGKGHVQLLGSGAIMRHVREAAQILANDYGVTSDVFSAPSFNELAREGHDAARWNLLHPTETQRVPYVAQVLADLPTVASTDYVKGYADQIRAFVPSKHYHVLGTDGFGRSDSRANLREHFEVDARYVVVAALSQLAKEGTVSNQVVADAIAKFGLNVDRINPLYA.

In terms of assembly, homodimer. Part of the PDH complex, consisting of multiple copies of pyruvate dehydrogenase (E1), dihydrolipoamide acetyltransferase (E2) and lipoamide dehydrogenase (E3). Thiamine diphosphate is required as a cofactor.

It carries out the reaction N(6)-[(R)-lipoyl]-L-lysyl-[protein] + pyruvate + H(+) = N(6)-[(R)-S(8)-acetyldihydrolipoyl]-L-lysyl-[protein] + CO2. In terms of biological role, component of the pyruvate dehydrogenase (PDH) complex, that catalyzes the overall conversion of pyruvate to acetyl-CoA and CO(2). This is Pyruvate dehydrogenase E1 component (aceE) from Haemophilus influenzae (strain ATCC 51907 / DSM 11121 / KW20 / Rd).